The following is a 152-amino-acid chain: Ribosomal RNA large subunit methyltransferase H (152 aa).

Residues Leu-70, Gly-102, and Leu-120 to Phe-125 contribute to the S-adenosyl-L-methionine site.

It belongs to the RNA methyltransferase RlmH family. In terms of assembly, homodimer.

It localises to the cytoplasm. The enzyme catalyses pseudouridine(1915) in 23S rRNA + S-adenosyl-L-methionine = N(3)-methylpseudouridine(1915) in 23S rRNA + S-adenosyl-L-homocysteine + H(+). Its function is as follows. Specifically methylates the pseudouridine at position 1915 (m3Psi1915) in 23S rRNA. The polypeptide is Ribosomal RNA large subunit methyltransferase H (Pelobacter propionicus (strain DSM 2379 / NBRC 103807 / OttBd1)).